Here is a 235-residue protein sequence, read N- to C-terminus: Zorya protein ZorB (235 aa).

A helical membrane pass occupies residues 25–44 (LMAGLMMVFMFISIAYMHYV). One can recognise an OmpA-like domain in the interval 87 to 225 (QTLEVRFKSP…RVTFKVVTNA (139 aa)).

It belongs to the MotB family.

The protein resides in the cell inner membrane. In terms of biological role, component of antiviral defense system Zorya type II, composed of ZorA, ZorB and ZorE. Expression of Zorya type II in E.coli (strain MG1655) confers resistance to phages SECphi7 and T7. While most T7 infected Zorya-containing cells undergo abortive infection, a minority produce viable phage progeny. These eventually accumulate to a high multiplicity of infection, leading to culture collapse by 170 minutes after initial infection. ZorA and ZorB probably assemble in the cell inner membrane and exert their effect there. The polypeptide is Zorya protein ZorB (Escherichia coli (strain ATCC 8739 / DSM 1576 / NBRC 3972 / NCIMB 8545 / WDCM 00012 / Crooks)).